Here is a 367-residue protein sequence, read N- to C-terminus: 3-methyl-2-oxobutanoate dehydrogenase subunit alpha (367 aa).

Residues 99–101, 141–142, 170–176, 200–204, and H269 each bind thiamine diphosphate; these read QYR, PI, GDGATSE, and NQWAI. Residue Y100 participates in substrate binding. Positions 171 and 200 each coordinate Mg(2+).

As to quaternary structure, heteromer of E1 alpha (BkdA) and beta (BkdB) subunits. Part of the BCKADH complex, consisting of multiple copies of BkdA/BkdB (E1), BkdC (E2) and Lpd (E3). Mg(2+) is required as a cofactor. It depends on thiamine diphosphate as a cofactor.

The enzyme catalyses N(6)-[(R)-lipoyl]-L-lysyl-[protein] + 3-methyl-2-oxobutanoate + H(+) = N(6)-[(R)-S(8)-2-methylpropanoyldihydrolipoyl]-L-lysyl-[protein] + CO2. In terms of biological role, component of the branched-chain alpha-ketoacid dehydrogenase (BCKADH) complex, that catalyzes the overall conversion of branched-chain alpha-ketoacids to acyl-CoA and CO(2). This chain is 3-methyl-2-oxobutanoate dehydrogenase subunit alpha (bkdA), found in Mycobacterium tuberculosis (strain CDC 1551 / Oshkosh).